A 440-amino-acid chain; its full sequence is tRNA(Ile)-lysidine synthase (440 aa).

ATP is bound at residue 31–36 (SGGADS).

It belongs to the tRNA(Ile)-lysidine synthase family.

The protein resides in the cytoplasm. It catalyses the reaction cytidine(34) in tRNA(Ile2) + L-lysine + ATP = lysidine(34) in tRNA(Ile2) + AMP + diphosphate + H(+). Ligates lysine onto the cytidine present at position 34 of the AUA codon-specific tRNA(Ile) that contains the anticodon CAU, in an ATP-dependent manner. Cytidine is converted to lysidine, thus changing the amino acid specificity of the tRNA from methionine to isoleucine. This chain is tRNA(Ile)-lysidine synthase, found in Borreliella burgdorferi (strain ATCC 35210 / DSM 4680 / CIP 102532 / B31) (Borrelia burgdorferi).